Reading from the N-terminus, the 491-residue chain is Spermatogenesis-defective protein 39 homolog (491 aa).

Position 21 is a phosphothreonine (threonine 21). Polar residues predominate over residues 72 to 81 (KETAGSSGST). The interval 72–101 (KETAGSSGSTPEGREQLKGRNSFYTQLPKP) is disordered. A Phosphothreonine modification is found at threonine 115. Phosphoserine occurs at positions 119, 122, and 128. A disordered region spans residues 121 to 141 (QSLSDALSDTPAKSYAPELGR). At threonine 130 the chain carries Phosphothreonine.

It belongs to the SPE39 family. Interacts with VPS33B. Associates with the homotypic fusion and vacuole protein sorting (HOPS) complex; impaired by VPS33B. Interacts with RAB11A.

The protein localises to the cytoplasm. Its subcellular location is the cytoplasmic vesicle. The protein resides in the early endosome. It localises to the recycling endosome. It is found in the late endosome. Its function is as follows. Proposed to be involved in endosomal maturation implicating in part VPS33B. In epithelial cells, the VPS33B:VIPAS39 complex may play a role in the apical RAB11A-dependent recycling pathway and in the maintenance of the apical-basolateral polarity. May play a role in lysosomal trafficking, probably via association with the core HOPS complex in a discrete population of endosomes; the functions seems to be independent of VPS33B. May play a role in vesicular trafficking during spermatogenesis. May be involved in direct or indirect transcriptional regulation of E-cadherin. The sequence is that of Spermatogenesis-defective protein 39 homolog (Vipas39) from Mus musculus (Mouse).